A 283-amino-acid polypeptide reads, in one-letter code: Apidaecins type 73 (283 aa).

The signal sequence occupies residues Lys1 to Gly18. 9 consecutive propeptides follow at residues Asn19–Pro41, Glu62–Pro69, Glu90–Pro97, Glu118–Pro125, Glu146–Pro153, Glu174–Pro181, Glu202–Pro209, Glu230–Pro237, and Glu258–Pro265. Residues Asn19–Ile283 form a disordered region. Pro residues predominate over residues Ile273 to Ile283.

Belongs to the apidaecin family.

It localises to the secreted. In terms of biological role, apidaecins have bactericidal activity; predominantly against Gram-negative bacteria. They seem to interfere with cell propagation. The polypeptide is Apidaecins type 73 (APID73) (Apis mellifera (Honeybee)).